The sequence spans 1077 residues: Rap guanine nucleotide exchange factor 1 (1077 aa).

A Glycyl lysine isopeptide (Lys-Gly) (interchain with G-Cter in SUMO2) cross-link involves residue L57. 2 disordered regions span residues 207–235 and 248–300; these read IEKQ…AELP and TGMS…PTRV. Residues 213–228 are compositionally biased toward low complexity; that stretch reads PSPTSPVKPSSPASKP. 5 positions are modified to phosphoserine: S281, S293, S314, S335, and S360. Positions 281 to 292 match the SH3-binding motif; that stretch reads SPPPALPPKKRQ. 2 disordered regions span residues 336–376 and 411–494; these read GGSH…QCSR and LSPL…EDLQ. Positions 358–371 are enriched in basic and acidic residues; the sequence is SKSDEQLSSLDRDS. The SH3-binding signature appears at 451–462; it reads DTPPALPEKKRR. The span at 484-494 shows a compositional bias: polar residues; it reads QYDNISGEDLQ. A Phosphotyrosine; by HCK modification is found at Y504. 2 consecutive short sequence motifs (SH3-binding) follow at residues 538–549 and 606–617; these read EKPPPLPEKKNK and APPPALPPKQRQ. The tract at residues 600-670 is disordered; sequence DSVQELAPPP…SEEEVDELSL (71 aa). Residues 640-651 show a composition bias toward basic and acidic residues; sequence KDSRDGSERAPK. A compositionally biased stretch (acidic residues) spans 660-669; it reads QSEEEVDELS. An N-terminal Ras-GEF domain is found at 688 to 810; that stretch reads DGPDVRGGSG…LRKNILDKVD (123 aa). Residues 840–1064 enclose the Ras-GEF domain; the sequence is HSHEIAEQLT…WELSLKIKPR (225 aa).

As to quaternary structure, interacts with HCK (via SH3-binding sites). Interacts with CRK (via SH3-binding sites). Post-translationally, phosphorylation at Tyr-504 enhances activity as Rap guanine nucleotide exchange factor. In terms of tissue distribution, ubiquitously expressed in adult and fetus. Expression is high in adult skeletal muscle and placenta and in fetal brain and heart. Low levels of expression in adult and fetal liver.

It localises to the early endosome. Functionally, guanine nucleotide-releasing protein that binds to SH3 domain of CRK and GRB2/ASH. Transduces signals from CRK to activate RAS. Involved in cell branching and adhesion mediated by BCAR1-CRK-RAPGEF1 signaling and activation of RAP1. Plays a role in the establishment of basal endothelial barrier function. Plays a role in nerve growth factor (NGF)-induced sustained activation of Rap1 and neurite outgrowth. In Homo sapiens (Human), this protein is Rap guanine nucleotide exchange factor 1 (RAPGEF1).